The primary structure comprises 259 residues: S-methyl-5'-thioadenosine phosphorylase (259 aa).

Phosphate-binding positions include Ser9 and 50–51; that span reads RH. Met175 contacts substrate. A phosphate-binding site is contributed by Thr176. Residue 199-201 participates in substrate binding; it reads DLD.

Belongs to the PNP/MTAP phosphorylase family. MTAP subfamily. As to quaternary structure, homohexamer. Dimer of a homotrimer.

The catalysed reaction is S-methyl-5'-thioadenosine + phosphate = 5-(methylsulfanyl)-alpha-D-ribose 1-phosphate + adenine. It participates in amino-acid biosynthesis; L-methionine biosynthesis via salvage pathway; S-methyl-5-thio-alpha-D-ribose 1-phosphate from S-methyl-5'-thioadenosine (phosphorylase route): step 1/1. Functionally, catalyzes the reversible phosphorylation of S-methyl-5'-thioadenosine (MTA) to adenine and 5-methylthioribose-1-phosphate. Involved in the breakdown of MTA, a major by-product of polyamine biosynthesis. Responsible for the first step in the methionine salvage pathway after MTA has been generated from S-adenosylmethionine. Has broad substrate specificity with 6-aminopurine nucleosides as preferred substrates. This Mycolicibacterium smegmatis (strain ATCC 700084 / mc(2)155) (Mycobacterium smegmatis) protein is S-methyl-5'-thioadenosine phosphorylase.